We begin with the raw amino-acid sequence, 596 residues long: Membrane protein insertase YidC (596 aa).

Transmembrane regions (helical) follow at residues 4–24 (NKLIGLILISILLIVYTHFFD), 332–352 (LGWPIVKWINLYLIIPIFSFI), 359–379 (YGLVILILVIFIKLLLLPLSY), 425–445 (LSGCIPVLLQMPILLAMFNFF), 468–488 (IINLPFQIPFYGSHVSLFTLL), and 518–538 (PITFMFILNSFPAGLSFYYFV). Residues 565 to 584 (KNKEKSANNKEGSFKKRFQD) show a composition bias toward basic and acidic residues. The disordered stretch occupies residues 565 to 596 (KNKEKSANNKEGSFKKRFQDAIKASASHKGKK).

This sequence belongs to the OXA1/ALB3/YidC family. Type 1 subfamily. As to quaternary structure, interacts with the Sec translocase complex via SecD. Specifically interacts with transmembrane segments of nascent integral membrane proteins during membrane integration.

The protein localises to the cell inner membrane. Required for the insertion and/or proper folding and/or complex formation of integral membrane proteins into the membrane. Involved in integration of membrane proteins that insert both dependently and independently of the Sec translocase complex, as well as at least some lipoproteins. Aids folding of multispanning membrane proteins. The protein is Membrane protein insertase YidC of Amoebophilus asiaticus (strain 5a2).